A 299-amino-acid chain; its full sequence is 4-diphosphocytidyl-2-C-methyl-D-erythritol kinase (299 aa).

Lys22 is a catalytic residue. Residue 108-118 participates in ATP binding; that stretch reads PVGAGLGGGSS. Asp150 is an active-site residue.

This sequence belongs to the GHMP kinase family. IspE subfamily.

The catalysed reaction is 4-CDP-2-C-methyl-D-erythritol + ATP = 4-CDP-2-C-methyl-D-erythritol 2-phosphate + ADP + H(+). The protein operates within isoprenoid biosynthesis; isopentenyl diphosphate biosynthesis via DXP pathway; isopentenyl diphosphate from 1-deoxy-D-xylulose 5-phosphate: step 3/6. In terms of biological role, catalyzes the phosphorylation of the position 2 hydroxy group of 4-diphosphocytidyl-2C-methyl-D-erythritol. This Desulfotalea psychrophila (strain LSv54 / DSM 12343) protein is 4-diphosphocytidyl-2-C-methyl-D-erythritol kinase.